A 215-amino-acid chain; its full sequence is UPF0502 protein YceH (215 aa).

This sequence belongs to the UPF0502 family.

The chain is UPF0502 protein YceH from Salmonella arizonae (strain ATCC BAA-731 / CDC346-86 / RSK2980).